A 239-amino-acid chain; its full sequence is N-glycosylase/DNA lyase (239 aa).

8-oxoguanine contacts are provided by Q24, S51, and W62. The interval 118-182 is helix-hairpin-helix; sequence ERYYEDMTLL…EDVRIIKLTR (65 aa). K142 (schiff-base intermediate with DNA) is an active-site residue. Residues F146 and P172 each coordinate 8-oxoguanine. The active site involves D174. The 8-oxoguanine site is built by D208 and W212.

The protein belongs to the archaeal N-glycosylase/DNA lyase (AGOG) family.

It carries out the reaction 2'-deoxyribonucleotide-(2'-deoxyribose 5'-phosphate)-2'-deoxyribonucleotide-DNA = a 3'-end 2'-deoxyribonucleotide-(2,3-dehydro-2,3-deoxyribose 5'-phosphate)-DNA + a 5'-end 5'-phospho-2'-deoxyribonucleoside-DNA + H(+). In terms of biological role, DNA repair enzyme that is part of the base excision repair (BER) pathway; protects from oxidative damage by removing the major product of DNA oxidation, 8-oxoguanine (GO), from single- and double-stranded DNA substrates. The polypeptide is N-glycosylase/DNA lyase (Pyrococcus horikoshii (strain ATCC 700860 / DSM 12428 / JCM 9974 / NBRC 100139 / OT-3)).